A 153-amino-acid chain; its full sequence is Cytochrome c oxidase subunit 5A, mitochondrial (153 aa).

Residues 1-20 (MLRNTFTRAGGLSRITSVRF) constitute a mitochondrion transit peptide. The Mitochondrial matrix segment spans residues 21–88 (AQTHALSNAA…EWGPRRPVLN (68 aa)). The chain crosses the membrane as a helical span at residues 89 to 111 (KGDSSFIAKGVAAGLLFSVGLFA). Residues 112–153 (VVRMAGGQDAKTMNKEWQLKSDEYLKSKNANPWGGYSQVQSK) are Mitochondrial intermembrane-facing.

This sequence belongs to the cytochrome c oxidase IV family. Component of the cytochrome c oxidase (complex IV, CIV), a multisubunit enzyme composed of 12 subunits. The complex is composed of a catalytic core of 3 subunits COX1, COX2 and COX3, encoded in the mitochondrial DNA, and 9 supernumerary subunits COX4, COX5A (or COX5B), COX6, COX7, COX8, COX9, COX12, COX13 and COX26, which are encoded in the nuclear genome. COX5A is the predominant subunit V during aerobic/normoxic growth, it gets replaced by COX5B under anaerobic/hypoxic conditions. The complex exists as a monomer or a dimer and forms supercomplexes (SCs) in the inner mitochondrial membrane with a dimer of ubiquinol-cytochrome c oxidoreductase (cytochrome b-c1 complex, complex III, CIII), resulting in 2 different assemblies (supercomplexes III(2)IV and III(2)IV(2)). COX5A interacts with COR1, CYT1 and QCR6 at the CIII-CIV interface.

Its subcellular location is the mitochondrion inner membrane. It functions in the pathway energy metabolism; oxidative phosphorylation. In terms of biological role, component of the cytochrome c oxidase, the last enzyme in the mitochondrial electron transport chain which drives oxidative phosphorylation. The respiratory chain contains 3 multisubunit complexes succinate dehydrogenase (complex II, CII), ubiquinol-cytochrome c oxidoreductase (cytochrome b-c1 complex, complex III, CIII) and cytochrome c oxidase (complex IV, CIV), that cooperate to transfer electrons derived from NADH and succinate to molecular oxygen, creating an electrochemical gradient over the inner membrane that drives transmembrane transport and the ATP synthase. Cytochrome c oxidase is the component of the respiratory chain that catalyzes the reduction of oxygen to water. Electrons originating from reduced cytochrome c in the intermembrane space (IMS) are transferred via the dinuclear copper A center (CU(A)) of COX2 and heme A of COX1 to the active site in COX1, a binuclear center (BNC) formed by heme A3 and copper B (CU(B)). The BNC reduces molecular oxygen to 2 water molecules using 4 electrons from cytochrome c in the IMS and 4 protons from the mitochondrial matrix. The sequence is that of Cytochrome c oxidase subunit 5A, mitochondrial (COX5A) from Saccharomyces cerevisiae (strain ATCC 204508 / S288c) (Baker's yeast).